Reading from the N-terminus, the 170-residue chain is Protein ECM34 (170 aa).

N-linked (GlcNAc...) asparagine glycosylation occurs at Asn-45. 2 helical membrane passes run Ile-51 to Gly-71 and Thr-98 to Tyr-118.

This sequence belongs to the DUP/COS family.

The protein resides in the membrane. In terms of biological role, may be involved in cell wall organization and biogenesis. The chain is Protein ECM34 (ECM34) from Saccharomyces cerevisiae (strain ATCC 204508 / S288c) (Baker's yeast).